The sequence spans 164 residues: Cold-inducible RNA-binding protein (164 aa).

In terms of domain architecture, RRM spans 6 to 84 (GKLFVGGLSF…RQIRVDQAGK (79 aa)). Residues 65-164 (AGMNGKTVDG…SYRDSYDSYG (100 aa)) form a disordered region. Residues 93 to 118 (YRGGSSGGGRGFFRGGRGRGGGGYGG) show a composition bias toward gly residues. A compositionally biased stretch (basic and acidic residues) spans 155-164 (SYRDSYDSYG).

As to quaternary structure, interacts with prmt1. Interacts with elavl1/elrA (via RRM3). Associates with ribosomes. Post-translationally, methylated on arginine residues within RGG motifs. Methylation by prmt1 promotes cytoplasmic accumulation.

The protein resides in the nucleus. It localises to the nucleoplasm. Its subcellular location is the cytoplasm. Its function is as follows. Cold-inducible mRNA binding protein. Acts cooperatively with elavl1/elrA to stabilize AU-rich element (ARE)-containing mRNAs by binding to them and inhibiting their deadenylation. Essential for embryonic gastrulation and neural development, acting to maintain the expression of a set of adhesion molecules, and cell movement during embryogenesis. Required for pronephros development. May play a role in hibernation. This Aquarana catesbeiana (American bullfrog) protein is Cold-inducible RNA-binding protein.